A 58-amino-acid chain; its full sequence is MLSNIGFPGLILILVAILILFGPKKLPEIGRSLGETLKEFKKSTRELTDDAFQEKEKK.

Residues 1 to 21 form a helical membrane-spanning segment; it reads MLSNIGFPGLILILVAILILF.

Belongs to the TatA/E family. In terms of assembly, forms a complex with TatC.

The protein resides in the cell membrane. Functionally, part of the twin-arginine translocation (Tat) system that transports large folded proteins containing a characteristic twin-arginine motif in their signal peptide across membranes. TatA could form the protein-conducting channel of the Tat system. In Bacillus cytotoxicus (strain DSM 22905 / CIP 110041 / 391-98 / NVH 391-98), this protein is Sec-independent protein translocase protein TatA.